The chain runs to 807 residues: Putative AC transposase (807 aa).

2 disordered regions span residues 42–140 and 785–807; these read GLKR…KKCT and MDEDEDAIEFSKNNEDVASGSSP. Polar residues predominate over residues 84–98; that stretch reads QSVSSSNANGTATDP. 10 tandem repeats follow at residues 109 to 110, 111 to 112, 113 to 114, 115 to 116, 117 to 118, 119 to 120, 121 to 122, 123 to 124, 125 to 126, and 127 to 128. The segment at 109-128 is 10 X 2 AA tandem repeats of P-[QE]; sequence PQPQPQPQPEPQPQPQPEPE. Positions 110 to 125 are enriched in pro residues; the sequence is QPQPQPQPEPQPQPQP.

The chain is Putative AC transposase from Zea mays (Maize).